A 311-amino-acid chain; its full sequence is Asialoglycoprotein receptor 2 (311 aa).

The segment at 1–44 is disordered; that stretch reads MAKDFQDIQQLSSEENDHPFHQGEGPGTRRLNPRRGNPFLKGPP. Residues 1–58 lie on the Cytoplasmic side of the membrane; the sequence is MAKDFQDIQQLSSEENDHPFHQGEGPGTRRLNPRRGNPFLKGPPPAQPLAQRLCSMVC. Positions 5-8 match the Endocytosis signal motif; it reads FQDI. At S13 the chain carries Phosphoserine. C54 carries S-palmitoyl cysteine lipidation. A helical; Signal-anchor for type II membrane protein transmembrane segment spans residues 59 to 79; the sequence is FSLLALSFNILLLVVICVTGS. Residues 80–311 lie on the Extracellular side of the membrane; the sequence is QSEGHGGAQL…KRRNATGEVA (232 aa). N-linked (GlcNAc...) asparagine glycosylation is found at N102 and N170. One can recognise a C-type lectin domain in the interval 176 to 302; it reads CCPVNWVEHQ…LQVYRWVCEK (127 aa). 3 disulfide bridges follow: C177–C188, C205–C300, and C278–C292. N-linked (GlcNAc...) asparagine glycosylation is present at N305.

The functioning ligand-binding unit of this receptor is thought to be at least a dimer. Interacts with LASS2. In terms of assembly, (Microbial infection) Interacts with hepatitis E virus capsid protein ORF2. As to expression, expressed exclusively in hepatic parenchymal cells.

It is found in the membrane. Mediates the endocytosis of plasma glycoproteins to which the terminal sialic acid residue on their complex carbohydrate moieties has been removed. The receptor recognizes terminal galactose and N-acetylgalactosamine units. After ligand binding to the receptor, the resulting complex is internalized and transported to a sorting organelle, where receptor and ligand are disassociated. The receptor then returns to the cell membrane surface. In Homo sapiens (Human), this protein is Asialoglycoprotein receptor 2 (ASGR2).